The primary structure comprises 174 residues: Micrococcal nuclease (174 aa).

The N-terminal stretch at 1–23 is a signal peptide; sequence MKSALAALRAVAAAVVLIVSVPA. Residues arginine 52, glutamate 60, and arginine 94 contribute to the active site.

It belongs to the thermonuclease family.

The enzyme catalyses Endonucleolytic cleavage to nucleoside 3'-phosphates and 3'-phosphooligonucleotide end-products.. The sequence is that of Micrococcal nuclease (nuc) from Shigella flexneri.